Consider the following 328-residue polypeptide: UPF0194 membrane protein YPA_1093 (328 aa).

Positions 1-22 (MNRKKIIVAAVIVALLATLAYG) are cleaved as a signal peptide. Coiled coils occupy residues 80–109 (YLNA…REEE) and 141–209 (KAVS…ILLA).

Belongs to the UPF0194 family.

The protein localises to the periplasm. This chain is UPF0194 membrane protein YPA_1093, found in Yersinia pestis bv. Antiqua (strain Antiqua).